The primary structure comprises 262 residues: Acyl-[acyl-carrier-protein]--UDP-N-acetylglucosamine O-acyltransferase (262 aa).

This sequence belongs to the transferase hexapeptide repeat family. LpxA subfamily. In terms of assembly, homotrimer.

The protein resides in the cytoplasm. It catalyses the reaction a (3R)-hydroxyacyl-[ACP] + UDP-N-acetyl-alpha-D-glucosamine = a UDP-3-O-[(3R)-3-hydroxyacyl]-N-acetyl-alpha-D-glucosamine + holo-[ACP]. The protein operates within glycolipid biosynthesis; lipid IV(A) biosynthesis; lipid IV(A) from (3R)-3-hydroxytetradecanoyl-[acyl-carrier-protein] and UDP-N-acetyl-alpha-D-glucosamine: step 1/6. In terms of biological role, involved in the biosynthesis of lipid A, a phosphorylated glycolipid that anchors the lipopolysaccharide to the outer membrane of the cell. This chain is Acyl-[acyl-carrier-protein]--UDP-N-acetylglucosamine O-acyltransferase, found in Campylobacter concisus (strain 13826).